Reading from the N-terminus, the 236-residue chain is Probable transcriptional regulatory protein Suden_1389 (236 aa).

Belongs to the TACO1 family.

It is found in the cytoplasm. The protein is Probable transcriptional regulatory protein Suden_1389 of Sulfurimonas denitrificans (strain ATCC 33889 / DSM 1251) (Thiomicrospira denitrificans (strain ATCC 33889 / DSM 1251)).